Here is a 304-residue protein sequence, read N- to C-terminus: MSWIERIKSNITPTRKASIPEGVWTKCDSCGQVLYRAELERNLEVCPKCDHHMRMSARNRLHSLLDEGSLVELGSELEPKDVLKFRDSKKYKDRLASAQKETGEKDALVVMKGTLHGMPVVAAAFEFAFMGGSMGSVVGARFVRAVEQALEDNCPLICFSASGGARMQEALMSLMQMAKTSAALAKMQERGLPYISVLTDPTMGGVSASFAMLGDLNIAEPKALIGFAGPRVIEQTVREKLPPGFQRSEFLIEKGAIDMIVRRPEMRLKLASILAKLMNLPAPNPDAPREGVVVPPAPGQESEA.

Residues 23–292 (VWTKCDSCGQ…PNPDAPREGV (270 aa)) enclose the CoA carboxyltransferase N-terminal domain. Residues Cys-27, Cys-30, Cys-46, and Cys-49 each contribute to the Zn(2+) site. Residues 27–49 (CDSCGQVLYRAELERNLEVCPKC) form a C4-type zinc finger. Residues 284–304 (NPDAPREGVVVPPAPGQESEA) are disordered.

It belongs to the AccD/PCCB family. Acetyl-CoA carboxylase is a heterohexamer composed of biotin carboxyl carrier protein (AccB), biotin carboxylase (AccC) and two subunits each of ACCase subunit alpha (AccA) and ACCase subunit beta (AccD). The cofactor is Zn(2+).

The protein localises to the cytoplasm. It catalyses the reaction N(6)-carboxybiotinyl-L-lysyl-[protein] + acetyl-CoA = N(6)-biotinyl-L-lysyl-[protein] + malonyl-CoA. It functions in the pathway lipid metabolism; malonyl-CoA biosynthesis; malonyl-CoA from acetyl-CoA: step 1/1. Functionally, component of the acetyl coenzyme A carboxylase (ACC) complex. Biotin carboxylase (BC) catalyzes the carboxylation of biotin on its carrier protein (BCCP) and then the CO(2) group is transferred by the transcarboxylase to acetyl-CoA to form malonyl-CoA. In Salmonella arizonae (strain ATCC BAA-731 / CDC346-86 / RSK2980), this protein is Acetyl-coenzyme A carboxylase carboxyl transferase subunit beta.